Consider the following 657-residue polypeptide: Threonine--tRNA ligase (657 aa).

Residues I7–T70 enclose the TGS domain. The segment at D253–P555 is catalytic. Residues C351, H402, and H532 each coordinate Zn(2+).

The protein belongs to the class-II aminoacyl-tRNA synthetase family. Homodimer. Zn(2+) is required as a cofactor.

It is found in the cytoplasm. The enzyme catalyses tRNA(Thr) + L-threonine + ATP = L-threonyl-tRNA(Thr) + AMP + diphosphate + H(+). Functionally, catalyzes the attachment of threonine to tRNA(Thr) in a two-step reaction: L-threonine is first activated by ATP to form Thr-AMP and then transferred to the acceptor end of tRNA(Thr). Also edits incorrectly charged L-seryl-tRNA(Thr). The protein is Threonine--tRNA ligase of Pelodictyon phaeoclathratiforme (strain DSM 5477 / BU-1).